The sequence spans 134 residues: MALLNIFDIAGSALAAQSKRLNVAASNLANADSVTGPDGQPYRAKQVVFQVDAAPGQATGGVKVASVIESQAPEKLVYEPGNPLADANGYVKMPNVDVVGEMVNTMSASRSYQANIEVLNTVKSMMLKTLTLGQ.

Belongs to the flagella basal body rod proteins family. In terms of assembly, the basal body constitutes a major portion of the flagellar organelle and consists of four rings (L,P,S, and M) mounted on a central rod. The rod consists of about 26 subunits of FlgG in the distal portion, and FlgB, FlgC and FlgF are thought to build up the proximal portion of the rod with about 6 subunits each.

The protein localises to the bacterial flagellum basal body. The sequence is that of Flagellar basal-body rod protein FlgC (flgC) from Salmonella typhi.